Reading from the N-terminus, the 208-residue chain is Uracil phosphoribosyltransferase (208 aa).

5-phospho-alpha-D-ribose 1-diphosphate contacts are provided by residues R78, R103, and 130–138 (DPMLATGGS). Residues I193 and 198–200 (GDA) each bind uracil. Residue D199 participates in 5-phospho-alpha-D-ribose 1-diphosphate binding.

The protein belongs to the UPRTase family. Mg(2+) is required as a cofactor.

It carries out the reaction UMP + diphosphate = 5-phospho-alpha-D-ribose 1-diphosphate + uracil. Its pathway is pyrimidine metabolism; UMP biosynthesis via salvage pathway; UMP from uracil: step 1/1. With respect to regulation, allosterically activated by GTP. Catalyzes the conversion of uracil and 5-phospho-alpha-D-ribose 1-diphosphate (PRPP) to UMP and diphosphate. The sequence is that of Uracil phosphoribosyltransferase from Yersinia pestis.